Here is a 448-residue protein sequence, read N- to C-terminus: Exodeoxyribonuclease 7 large subunit (448 aa).

The protein belongs to the XseA family. In terms of assembly, heterooligomer composed of large and small subunits.

Its subcellular location is the cytoplasm. The enzyme catalyses Exonucleolytic cleavage in either 5'- to 3'- or 3'- to 5'-direction to yield nucleoside 5'-phosphates.. Bidirectionally degrades single-stranded DNA into large acid-insoluble oligonucleotides, which are then degraded further into small acid-soluble oligonucleotides. This chain is Exodeoxyribonuclease 7 large subunit, found in Bacillus pumilus (strain SAFR-032).